Consider the following 374-residue polypeptide: Zinc finger CCCH domain-containing protein 15 homolog (374 aa).

2 C3H1-type zinc fingers span residues 89–116 and 167–197; these read DPKSLLCVFFKQGLCGKGAKCKFSHDLA and YFLEAVENNKYGWFWECPNGGDKCQYRHCLP.

Belongs to the ZC3H15/TMA46 family.

The polypeptide is Zinc finger CCCH domain-containing protein 15 homolog (Caenorhabditis briggsae).